The chain runs to 206 residues: Glycerol-3-phosphate acyltransferase (206 aa).

A run of 6 helical transmembrane segments spans residues 6–26 (IFLAFLCIGVSYSLGSFPSGF), 57–77 (KAALIVFLIDVSKGIGSILIA), 86–106 (FHVICGIAALSGHIWPIWLNW), 118–138 (VFLGISWQVGLASLGIFMAVL), 143–163 (IVSLSSISAAISLPILMFLSL), and 165–185 (EASFLNAYIIASFAAMIMVLW).

It belongs to the PlsY family. In terms of assembly, probably interacts with PlsX.

It localises to the cell inner membrane. The enzyme catalyses an acyl phosphate + sn-glycerol 3-phosphate = a 1-acyl-sn-glycero-3-phosphate + phosphate. It participates in lipid metabolism; phospholipid metabolism. Catalyzes the transfer of an acyl group from acyl-phosphate (acyl-PO(4)) to glycerol-3-phosphate (G3P) to form lysophosphatidic acid (LPA). This enzyme utilizes acyl-phosphate as fatty acyl donor, but not acyl-CoA or acyl-ACP. This Prochlorococcus marinus (strain MIT 9211) protein is Glycerol-3-phosphate acyltransferase.